A 382-amino-acid polypeptide reads, in one-letter code: Intermediate transcription factor 3 large subunit (382 aa).

Belongs to the orthopoxvirus OPG150 family. Heterodimerizes with protein A8 to form the virus intermediate transcription factor (VITF)-3.

Functionally, acts with RNA polymerase to initiate transcription from intermediate gene promoters. This Cynomys gunnisoni (Gunnison's prairie dog) protein is Intermediate transcription factor 3 large subunit (OPG150).